The primary structure comprises 142 residues: ATP synthase epsilon chain (142 aa).

The protein belongs to the ATPase epsilon chain family. As to quaternary structure, F-type ATPases have 2 components, CF(1) - the catalytic core - and CF(0) - the membrane proton channel. CF(1) has five subunits: alpha(3), beta(3), gamma(1), delta(1), epsilon(1). CF(0) has three main subunits: a, b and c.

Its subcellular location is the cell inner membrane. Functionally, produces ATP from ADP in the presence of a proton gradient across the membrane. This Shewanella loihica (strain ATCC BAA-1088 / PV-4) protein is ATP synthase epsilon chain.